The following is a 35-amino-acid chain: Unknown protein 14 from 2D-PAGE (35 aa).

Residues 1–35 (VVXXQTLXDXRGIYGDQGSIGPXXIXGLQGDRDAD) are disordered.

The polypeptide is Unknown protein 14 from 2D-PAGE (Bombyx mori (Silk moth)).